The primary structure comprises 110 residues: Large ribosomal subunit protein uL22 (110 aa).

It belongs to the universal ribosomal protein uL22 family. In terms of assembly, part of the 50S ribosomal subunit.

Functionally, this protein binds specifically to 23S rRNA; its binding is stimulated by other ribosomal proteins, e.g. L4, L17, and L20. It is important during the early stages of 50S assembly. It makes multiple contacts with different domains of the 23S rRNA in the assembled 50S subunit and ribosome. In terms of biological role, the globular domain of the protein is located near the polypeptide exit tunnel on the outside of the subunit, while an extended beta-hairpin is found that lines the wall of the exit tunnel in the center of the 70S ribosome. The sequence is that of Large ribosomal subunit protein uL22 from Acinetobacter baumannii (strain ACICU).